The sequence spans 210 residues: Dephospho-CoA kinase (210 aa).

Residues 18-210 (RIGITGGIAS…LSYPQVEVLL (193 aa)) enclose the DPCK domain. 26–31 (ASGKTS) serves as a coordination point for ATP.

Belongs to the CoaE family.

The protein resides in the cytoplasm. It carries out the reaction 3'-dephospho-CoA + ATP = ADP + CoA + H(+). The protein operates within cofactor biosynthesis; coenzyme A biosynthesis; CoA from (R)-pantothenate: step 5/5. Functionally, catalyzes the phosphorylation of the 3'-hydroxyl group of dephosphocoenzyme A to form coenzyme A. The chain is Dephospho-CoA kinase from Prochlorococcus marinus (strain SARG / CCMP1375 / SS120).